The following is a 659-amino-acid chain: Exoribonuclease 2 (659 aa).

The RNB domain occupies 189–531 (RENLTALHFV…NHRLIKAVLA (343 aa)). Residues 576 to 658 (NAEFEAEVQD…ATRSIVGEIL (83 aa)) form the S1 motif domain.

This sequence belongs to the RNR ribonuclease family. RNase II subfamily.

Its subcellular location is the cytoplasm. The enzyme catalyses Exonucleolytic cleavage in the 3'- to 5'-direction to yield nucleoside 5'-phosphates.. Its function is as follows. Involved in mRNA degradation. Hydrolyzes single-stranded polyribonucleotides processively in the 3' to 5' direction. The chain is Exoribonuclease 2 from Haemophilus influenzae (strain PittGG).